Here is a 278-residue protein sequence, read N- to C-terminus: Glycerophosphodiester phosphodiesterase GpdQ (278 aa).

Aspartate 8, histidine 10, aspartate 50, asparagine 80, histidine 156, histidine 195, and histidine 197 together coordinate Fe cation.

This sequence belongs to the cyclic nucleotide phosphodiesterase class-III family. Requires Fe(2+) as cofactor.

The catalysed reaction is a sn-glycero-3-phosphodiester + H2O = an alcohol + sn-glycerol 3-phosphate + H(+). The enzyme catalyses sn-glycero-3-phosphoethanolamine + H2O = ethanolamine + sn-glycerol 3-phosphate + H(+). In terms of biological role, catalyzes the hydrolysis of the 3'-5' phosphodiester bond of glycerophosphodiesters such as glycerophosphorylethanolamine (GPE), a typical phospholipid metabolite. This chain is Glycerophosphodiester phosphodiesterase GpdQ, found in Enterobacter lignolyticus (strain SCF1).